Reading from the N-terminus, the 152-residue chain is Ribosome maturation factor RimP (152 aa).

The protein belongs to the RimP family.

Its subcellular location is the cytoplasm. In terms of biological role, required for maturation of 30S ribosomal subunits. The sequence is that of Ribosome maturation factor RimP from Erwinia tasmaniensis (strain DSM 17950 / CFBP 7177 / CIP 109463 / NCPPB 4357 / Et1/99).